A 77-amino-acid chain; its full sequence is Translation initiation factor IF-1, chloroplastic (77 aa).

An S1-like domain is found at 1-71 (MKRQKWIHEG…TRGRIIYRLR (71 aa)).

It belongs to the IF-1 family. As to quaternary structure, component of the 30S ribosomal translation pre-initiation complex which assembles on the 30S ribosome in the order IF-2 and IF-3, IF-1 and N-formylmethionyl-tRNA(fMet); mRNA recruitment can occur at any time during PIC assembly.

The protein localises to the plastid. Its subcellular location is the chloroplast. Its function is as follows. One of the essential components for the initiation of protein synthesis. Stabilizes the binding of IF-2 and IF-3 on the 30S subunit to which N-formylmethionyl-tRNA(fMet) subsequently binds. Helps modulate mRNA selection, yielding the 30S pre-initiation complex (PIC). Upon addition of the 50S ribosomal subunit IF-1, IF-2 and IF-3 are released leaving the mature 70S translation initiation complex. This is Translation initiation factor IF-1, chloroplastic from Leucophyllum frutescens (Texas ranger).